A 167-amino-acid chain; its full sequence is Transcription antitermination protein NusB (167 aa).

This sequence belongs to the NusB family.

Involved in transcription antitermination. Required for transcription of ribosomal RNA (rRNA) genes. Binds specifically to the boxA antiterminator sequence of the ribosomal RNA (rrn) operons. The polypeptide is Transcription antitermination protein NusB (Nitrosomonas europaea (strain ATCC 19718 / CIP 103999 / KCTC 2705 / NBRC 14298)).